The sequence spans 288 residues: uncharacterized protein (288 aa).

This is an uncharacterized protein from Mycobacterium tuberculosis (strain CDC 1551 / Oshkosh).